A 481-amino-acid polypeptide reads, in one-letter code: MFLLLQILYILLFLNLADTSDDEYRLLKDLREGYDPMERPVSDHMKPVNVKLRLILQQLVDVDEKNQVITLVVWTQYTWNDYKMKWSPEEYGNITSLQIPFGTLWKPDILLFNSANEHFDSSFPVNMVVSNDGNVLFAPPGIMQFSCSLSMTWFPYDEQVCYLKFGSWTYGKKLDLRIDDADLPEGHKMDLQYYVPNGEFDLISTPAFRKSTTFLDETYVELYFHMHLKRRTMYYGLNWIIPSILISLSNILGFTMPVECGEKVTLQITNFLSIMVFLAMVSEVAPPTSESIPIIAAFFSFAIVILGVSICVSLITVNIFYRHPKMHRMGDWTRYIFLEWLPWFLLMSRPDHVFRKPKREKKKEEEEDEESNAGGKEEESELISQKQQRPRLLVNSQIVMDSTIPYLEEVIGYLKVFKAKLDDDEEEEEEILNWRFMAMVIDRASLFLFTGLIFGTTFVIFAACPNLFSADQIIETEPVIT.

The first 19 residues, 1–19, serve as a signal peptide directing secretion; it reads MFLLLQILYILLFLNLADT. Residues 20-235 lie on the Extracellular side of the membrane; sequence SDDEYRLLKD…MHLKRRTMYY (216 aa). N-linked (GlcNAc...) asparagine glycosylation is present at N93. C147 and C161 are oxidised to a cystine. 3 helical membrane-spanning segments follow: residues 236-256, 264-284, and 292-312; these read GLNW…GFTM, VTLQ…VSEV, and IPII…SICV. Residues 313–443 lie on the Cytoplasmic side of the membrane; the sequence is SLITVNIFYR…WRFMAMVIDR (131 aa). The segment at 356 to 384 is disordered; the sequence is KPKREKKKEEEEDEESNAGGKEEESELIS. Residues 444 to 464 form a helical membrane-spanning segment; it reads ASLFLFTGLIFGTTFVIFAAC.

The protein belongs to the ligand-gated ion channel (TC 1.A.9) family. Acetylcholine receptor (TC 1.A.9.1) subfamily. As to quaternary structure, neuronal AChR seems to be composed of two different type of subunits: alpha and beta.

The protein resides in the postsynaptic cell membrane. It localises to the cell membrane. Functionally, after binding acetylcholine, the AChR responds by an extensive change in conformation that affects all subunits and leads to opening of an ion-conducting channel across the plasma membrane. Nicotinic acetylcholine receptor in the MC pharyngeal motor neuron involved in pharyngeal pumping. Has a role in the determination of life span possibly via calorific restriction which affects growth rate, although this is independent of metabolic activity. The chain is Neuronal acetylcholine receptor subunit eat-2 from Caenorhabditis briggsae.